Reading from the N-terminus, the 417-residue chain is Tyrosine--tRNA ligase (417 aa).

Residue tyrosine 39 participates in L-tyrosine binding. Residues proline 44 to glycine 53 carry the 'HIGH' region motif. L-tyrosine contacts are provided by tyrosine 176 and glutamine 180. Positions lysine 236–serine 240 match the 'KMSKS' region motif. Lysine 239 contacts ATP. One can recognise an S4 RNA-binding domain in the interval leucine 350–valine 417.

Belongs to the class-I aminoacyl-tRNA synthetase family. TyrS type 1 subfamily. Homodimer.

Its subcellular location is the cytoplasm. It carries out the reaction tRNA(Tyr) + L-tyrosine + ATP = L-tyrosyl-tRNA(Tyr) + AMP + diphosphate + H(+). Its function is as follows. Catalyzes the attachment of tyrosine to tRNA(Tyr) in a two-step reaction: tyrosine is first activated by ATP to form Tyr-AMP and then transferred to the acceptor end of tRNA(Tyr). The protein is Tyrosine--tRNA ligase of Rhizobium meliloti (strain 1021) (Ensifer meliloti).